The sequence spans 307 residues: Taste receptor type 2 member 41 (307 aa).

Over 1–7 (MQAALTA) the chain is Extracellular. Residues 8–28 (FFMLLFSLLSLLGIAANGFIV) form a helical membrane-spanning segment. The Cytoplasmic portion of the chain corresponds to 29–40 (LVLGREWLRYGR). Residues 41–61 (LLPLDMILISLGASRFCLQLV) traverse the membrane as a helical segment. The Extracellular segment spans residues 62–88 (GTVHNFYYSAQKVEYSGGLGRQFFHLH). A helical membrane pass occupies residues 89 to 109 (WHFLNSATFWFCSWLSVLFCV). The Cytoplasmic portion of the chain corresponds to 110 to 129 (KIANITHPTFLWLKWRFPGW). The helical transmembrane segment at 130–150 (VPWLLLGSVLISFIITLLFFW) threads the bilayer. The Extracellular portion of the chain corresponds to 151-183 (VNYPAYQEFLIRKFSVNMTYKWNTRIETYYFPS). Asn-167 is a glycosylation site (N-linked (GlcNAc...) asparagine). A helical transmembrane segment spans residues 184 to 204 (LKLVIWSIPFSVFLVSIMLLI). Residues 205 to 234 (NSLRRHTQRMQHNGHSLQDPSTQAHTRALK) lie on the Cytoplasmic side of the membrane. Residues 235–255 (SLISFLILYALSFLSLIIDAT) traverse the membrane as a helical segment. Residues 256-264 (KFISMQNDF) lie on the Extracellular side of the membrane. Residues 265 to 285 (YWPWQIAVYLCISVHPFILIF) traverse the membrane as a helical segment. The Cytoplasmic portion of the chain corresponds to 286-307 (SNLKLRSVFSQLLLLARGFWVA).

Belongs to the G-protein coupled receptor T2R family.

The protein localises to the membrane. Functionally, receptor that may play a role in the perception of bitterness and is gustducin-linked. May play a role in sensing the chemical composition of the gastrointestinal content. The activity of this receptor may stimulate alpha gustducin, mediate PLC-beta-2 activation and lead to the gating of TRPM5. The chain is Taste receptor type 2 member 41 (TAS2R41) from Pan troglodytes (Chimpanzee).